A 639-amino-acid polypeptide reads, in one-letter code: DNA gyrase subunit B (639 aa).

Residues 392 to 402 (QAEELTRRKSA) show a composition bias toward basic and acidic residues. The interval 392-417 (QAEELTRRKSALESTSLPGKLADCQS) is disordered. One can recognise a Toprim domain in the interval 423 to 537 (SELFIVEGDS…AGYVYAAQPP (115 aa)). The Mg(2+) site is built by E429, D502, and D504.

Belongs to the type II topoisomerase GyrB family. In terms of assembly, heterotetramer, composed of two GyrA and two GyrB chains. In the heterotetramer, GyrA contains the active site tyrosine that forms a transient covalent intermediate with DNA, while GyrB binds cofactors and catalyzes ATP hydrolysis. Requires Mg(2+) as cofactor. The cofactor is Mn(2+). Ca(2+) serves as cofactor.

It is found in the cytoplasm. It carries out the reaction ATP-dependent breakage, passage and rejoining of double-stranded DNA.. Its function is as follows. A type II topoisomerase that negatively supercoils closed circular double-stranded (ds) DNA in an ATP-dependent manner to modulate DNA topology and maintain chromosomes in an underwound state. Negative supercoiling favors strand separation, and DNA replication, transcription, recombination and repair, all of which involve strand separation. Also able to catalyze the interconversion of other topological isomers of dsDNA rings, including catenanes and knotted rings. Type II topoisomerases break and join 2 DNA strands simultaneously in an ATP-dependent manner. The chain is DNA gyrase subunit B from Haloferax lucentense (strain DSM 14919 / JCM 9276 / NCIMB 13854 / Aa 2.2) (Haloferax alicantei).